The sequence spans 310 residues: Conjugation stage-specific protein (310 aa).

Belongs to the archaeal Rpo3/eukaryotic RPB3 RNA polymerase subunit family.

The protein localises to the nucleus. Functionally, may be a stage-specific RNA polymerase subunit. The protein is Conjugation stage-specific protein (CNJC) of Tetrahymena thermophila.